A 272-amino-acid polypeptide reads, in one-letter code: Glycosylphosphatidylinositol anchor biosynthesis protein 11 (272 aa).

The span at 21–31 (QSTSTTKSTPG) shows a compositional bias: polar residues. The tract at residues 21–48 (QSTSTTKSTPGSQATESSTTTAGSSSSL) is disordered. A compositionally biased stretch (low complexity) spans 32–48 (SQATESSTTTAGSSSSL). 5 consecutive transmembrane segments (helical) span residues 91–111 (VMLN…LLCL), 145–165 (LLAS…MVLF), 177–197 (FLCA…VHGV), 215–235 (TFGG…PIPL), and 248–268 (ILCG…TLFW).

This sequence belongs to the PIGF family.

It localises to the endoplasmic reticulum membrane. Its pathway is glycolipid biosynthesis; glycosylphosphatidylinositol-anchor biosynthesis. Acts in the GPI biosynthetic pathway between GlcNAc-PI synthesis and GPI transfer to protein. The polypeptide is Glycosylphosphatidylinositol anchor biosynthesis protein 11 (gpi-11) (Neurospora crassa (strain ATCC 24698 / 74-OR23-1A / CBS 708.71 / DSM 1257 / FGSC 987)).